Consider the following 180-residue polypeptide: Protein SPMIP9 (180 aa).

As to quaternary structure, microtubule inner protein component of sperm flagellar doublet microtubules. As to expression, testis-specific. Detected in the germ cell lineage at all stages.

It localises to the nucleus. It is found in the cytoplasm. Its subcellular location is the cytoskeleton. The protein resides in the flagellum axoneme. In terms of biological role, microtubule inner protein (MIP) part of the dynein-decorated doublet microtubules (DMTs) in flagella axoneme. The protein is Protein SPMIP9 of Homo sapiens (Human).